The chain runs to 497 residues: 4,4'-diaponeurosporene oxygenase (497 aa).

7–19 (VIGGGLGGISAAI) is an FAD binding site.

It belongs to the carotenoid/retinoid oxidoreductase family. CrtP subfamily. FAD is required as a cofactor.

It catalyses the reaction all-trans-4,4'-diaponeurosporene + 2 AH2 + 2 O2 = 4,4'-diaponeurosporenal + 2 A + 3 H2O. The protein operates within carotenoid biosynthesis; staphyloxanthin biosynthesis; staphyloxanthin from farnesyl diphosphate: step 3/5. In terms of biological role, involved in the biosynthesis of the yellow-orange carotenoid staphyloxanthin, which plays a role in the virulence via its protective function against oxidative stress. Catalyzes the oxidation of the terminal methyl side group of 4,4'-diaponeurosporene to form 4,4'-diaponeurosporen-4-al. The C40 carotenoid lycopene is a poor substrate. The polypeptide is 4,4'-diaponeurosporene oxygenase (Staphylococcus aureus (strain Mu50 / ATCC 700699)).